The sequence spans 139 residues: ATP synthase epsilon chain (139 aa).

Belongs to the ATPase epsilon chain family. F-type ATPases have 2 components, CF(1) - the catalytic core - and CF(0) - the membrane proton channel. CF(1) has five subunits: alpha(3), beta(3), gamma(1), delta(1), epsilon(1). CF(0) has three main subunits: a, b and c.

It is found in the cell inner membrane. Functionally, produces ATP from ADP in the presence of a proton gradient across the membrane. The protein is ATP synthase epsilon chain of Actinobacillus pleuropneumoniae serotype 5b (strain L20).